Consider the following 330-residue polypeptide: Mitochondrial glycine transporter (330 aa).

Solcar repeat units lie at residues 11 to 94, 122 to 206, and 234 to 318; these read SSSY…LRQN, LSNL…LKKR, and TSAS…LIRR. Helical transmembrane passes span 17 to 42, 69 to 95, 128 to 153, 181 to 204, 238 to 264, and 293 to 311; these read FTAG…TRLQ, GTVP…RQNV, LTTG…VRYE, GFGA…EQLK, INFG…KTRI, and GLGL…AWTI.

It belongs to the mitochondrial carrier (TC 2.A.29) family. SLC25A38 subfamily.

The protein localises to the mitochondrion inner membrane. It catalyses the reaction glycine(in) = glycine(out). Functionally, mitochondrial glycine transporter that imports glycine into the mitochondrial matrix. Plays an important role in providing glycine for the first enzymatic step in heme biosynthesis, the condensation of glycine with succinyl-CoA to produce 5-aminolevulinate (ALA) in the mitochondrial matrix. The polypeptide is Mitochondrial glycine transporter (Sclerotinia sclerotiorum (strain ATCC 18683 / 1980 / Ss-1) (White mold)).